Reading from the N-terminus, the 383-residue chain is S-adenosylmethionine synthase (383 aa).

Residue histidine 15 participates in ATP binding. Aspartate 17 lines the Mg(2+) pocket. Glutamate 43 contributes to the K(+) binding site. L-methionine contacts are provided by glutamate 56 and glutamine 99. Residues 99-109 (QSPDINQGVDR) form a flexible loop region. ATP contacts are provided by residues 164–166 (DAK), 230–231 (RF), aspartate 239, 245–246 (RK), alanine 262, and lysine 266. Aspartate 239 is an L-methionine binding site. Lysine 270 serves as a coordination point for L-methionine.

The protein belongs to the AdoMet synthase family. As to quaternary structure, homotetramer; dimer of dimers. Requires Mg(2+) as cofactor. The cofactor is K(+).

The protein localises to the cytoplasm. The catalysed reaction is L-methionine + ATP + H2O = S-adenosyl-L-methionine + phosphate + diphosphate. Its pathway is amino-acid biosynthesis; S-adenosyl-L-methionine biosynthesis; S-adenosyl-L-methionine from L-methionine: step 1/1. Catalyzes the formation of S-adenosylmethionine (AdoMet) from methionine and ATP. The overall synthetic reaction is composed of two sequential steps, AdoMet formation and the subsequent tripolyphosphate hydrolysis which occurs prior to release of AdoMet from the enzyme. In Shewanella denitrificans (strain OS217 / ATCC BAA-1090 / DSM 15013), this protein is S-adenosylmethionine synthase.